A 140-amino-acid chain; its full sequence is Nuclear receptor 2C2-associated protein (140 aa).

This sequence belongs to the NR2C2AP family. Interacts with NR2C2/TR4.

The protein resides in the nucleus. Its function is as follows. May act as a repressor of NR2C2-mediated transactivation by suppressing the binding between NR2C2/TR4 and the TR4-response element in target genes. The protein is Nuclear receptor 2C2-associated protein (Nr2c2ap) of Mus musculus (Mouse).